Reading from the N-terminus, the 224-residue chain is Ribose-5-phosphate isomerase A (224 aa).

Residues threonine 34–threonine 37, aspartate 87–aspartate 90, and lysine 100–glycine 103 each bind substrate. Catalysis depends on glutamate 109, which acts as the Proton acceptor. Residue lysine 127 coordinates substrate.

It belongs to the ribose 5-phosphate isomerase family. As to quaternary structure, homodimer.

The catalysed reaction is aldehydo-D-ribose 5-phosphate = D-ribulose 5-phosphate. The protein operates within carbohydrate degradation; pentose phosphate pathway; D-ribose 5-phosphate from D-ribulose 5-phosphate (non-oxidative stage): step 1/1. Its function is as follows. Catalyzes the reversible conversion of ribose-5-phosphate to ribulose 5-phosphate. This is Ribose-5-phosphate isomerase A from Francisella tularensis subsp. tularensis (strain FSC 198).